The following is a 103-amino-acid chain: Protamine-2 (103 aa).

Positions 1–103 (MVRYRMRSLS…RTRRRRCRRY (103 aa)) are disordered. A phosphoserine mark is found at serine 8 and serine 10. Over residues 8 to 17 (SLSERPHEVH) the composition is skewed to basic and acidic residues. A compositionally biased stretch (low complexity) spans 23–35 (GQEQGHNGQEEQG). Phosphoserine is present on serine 37. Residues 39-48 (EHVEVYERTH) are compositionally biased toward basic and acidic residues. Over residues 51-103 (YSHHRRRRCSRRRLYRIHRRRHRSCRRRRRRSCRHRRRHRRGCRTRRRRCRRY) the composition is skewed to basic residues.

This sequence belongs to the protamine P2 family. In terms of assembly, interacts with TDRP. Post-translationally, proteolytic processing into mature chains is required for histone eviction during spermatogenesis. Transition proteins (TNP1 and TNP2) are required for processing. As to expression, testis.

The protein resides in the nucleus. It localises to the chromosome. In terms of biological role, protamines substitute for histones in the chromatin of sperm during the haploid phase of spermatogenesis. They compact sperm DNA into a highly condensed, stable and inactive complex. In Semnopithecus entellus (Northern plains gray langur), this protein is Protamine-2 (PRM2).